The chain runs to 367 residues: MEPIYEEYLANHGTIVKPYYWLSFSLDCSNCPYHIRTGEEARVSLTEFCQIFGFPYGTTFPQTKHLTFYELKTSSGSLVQKGHASSCTGNYIHPESMLFEMNGYLDSAIYNNDSIRHIILYSNNSPCNEANHCCISKMYNFLITYPGITLSIYFSQLYHTEMDFPASAWNREALRSLASLWPRVVLSPISGGIWHSVLHSFISGVSGSHVFQPILTGRALADRHNAYEINAITGVKPYFTDVLLQTKRNPNTKAQEALESYPLNNAFPGQFFQMPSGQLQPNLPPDLRAPVVFVLVPLRDLPPMHMGQNPNKPRNIVRHLNMPQMSFQETKDLGRLPTGRSVEIVEITEQFASSKEADEKKKKKGKK.

Residues 61–177 (PQTKHLTFYE…AWNREALRSL (117 aa)) form the CMP/dCMP-type deaminase domain. His93 lines the Zn(2+) pocket. Glu95 acts as the Proton donor in catalysis. Zn(2+)-binding residues include Cys127 and Cys134.

Belongs to the cytidine and deoxycytidylate deaminase family. Requires Zn(2+) as cofactor. Predominantly expressed in testis.

Putative C to U editing enzyme whose physiological substrate is not yet known. The protein is Putative C-&gt;U-editing enzyme APOBEC-4 (APOBEC4) of Homo sapiens (Human).